The primary structure comprises 85 residues: U4-theraphotoxin-Hhn1a (85 aa).

The signal sequence occupies residues 1 to 22 (MKVTLIAILTCAAVLVLHTTAA). Residues 23–48 (EELEAESQLMKVGMPDTELAAVDEER) constitute a propeptide that is removed on maturation. Intrachain disulfides connect C52-C66, C56-C77, and C71-C82.

The protein belongs to the neurotoxin 12 (Hwtx-2) family. 02 (Hwtx-2) subfamily. As to quaternary structure, monomer. Expressed by the venom gland.

Its subcellular location is the secreted. Its function is as follows. Neurotoxin active on both insects and mammals. The protein is U4-theraphotoxin-Hhn1a of Cyriopagopus hainanus (Chinese bird spider).